We begin with the raw amino-acid sequence, 272 residues long: 3-methyl-2-oxobutanoate hydroxymethyltransferase (272 aa).

Mg(2+) contacts are provided by aspartate 51 and aspartate 90. Residues 51 to 52 (DS), aspartate 90, and lysine 118 each bind 3-methyl-2-oxobutanoate. Glutamate 120 provides a ligand contact to Mg(2+). The Proton acceptor role is filled by glutamate 187.

This sequence belongs to the PanB family. Homodecamer; pentamer of dimers. The cofactor is Mg(2+).

The protein localises to the cytoplasm. It catalyses the reaction 3-methyl-2-oxobutanoate + (6R)-5,10-methylene-5,6,7,8-tetrahydrofolate + H2O = 2-dehydropantoate + (6S)-5,6,7,8-tetrahydrofolate. It functions in the pathway cofactor biosynthesis; (R)-pantothenate biosynthesis; (R)-pantoate from 3-methyl-2-oxobutanoate: step 1/2. Functionally, catalyzes the reversible reaction in which hydroxymethyl group from 5,10-methylenetetrahydrofolate is transferred onto alpha-ketoisovalerate to form ketopantoate. The polypeptide is 3-methyl-2-oxobutanoate hydroxymethyltransferase (Xylella fastidiosa (strain M12)).